Here is a 347-residue protein sequence, read N- to C-terminus: Methylthioribose-1-phosphate isomerase (347 aa).

Residues 46–48 (RGA), Arg89, and Gln196 contribute to the substrate site. Catalysis depends on Asp237, which acts as the Proton donor. 247–248 (NK) is a substrate binding site.

It belongs to the eIF-2B alpha/beta/delta subunits family. MtnA subfamily.

It carries out the reaction 5-(methylsulfanyl)-alpha-D-ribose 1-phosphate = 5-(methylsulfanyl)-D-ribulose 1-phosphate. Its pathway is amino-acid biosynthesis; L-methionine biosynthesis via salvage pathway; L-methionine from S-methyl-5-thio-alpha-D-ribose 1-phosphate: step 1/6. Catalyzes the interconversion of methylthioribose-1-phosphate (MTR-1-P) into methylthioribulose-1-phosphate (MTRu-1-P). The sequence is that of Methylthioribose-1-phosphate isomerase from Chloroflexus aurantiacus (strain ATCC 29366 / DSM 635 / J-10-fl).